Consider the following 323-residue polypeptide: Putative CDC123-like protein L884 (323 aa).

This sequence belongs to the CDC123 family.

The polypeptide is Putative CDC123-like protein L884 (Acanthamoeba polyphaga mimivirus (APMV)).